The primary structure comprises 106 residues: Urease subunit beta (106 aa).

It belongs to the urease beta subunit family. Heterotrimer of UreA (gamma), UreB (beta) and UreC (alpha) subunits. Three heterotrimers associate to form the active enzyme.

The protein localises to the cytoplasm. It carries out the reaction urea + 2 H2O + H(+) = hydrogencarbonate + 2 NH4(+). It participates in nitrogen metabolism; urea degradation; CO(2) and NH(3) from urea (urease route): step 1/1. The protein is Urease subunit beta of Prochlorococcus marinus (strain NATL1A).